The chain runs to 506 residues: Histidine ammonia-lyase (506 aa).

The segment at residues 143 to 145 (ASG) is a cross-link (5-imidazolinone (Ala-Gly)). At S144 the chain carries 2,3-didehydroalanine (Ser).

It belongs to the PAL/histidase family. Post-translationally, contains an active site 4-methylidene-imidazol-5-one (MIO), which is formed autocatalytically by cyclization and dehydration of residues Ala-Ser-Gly.

The protein resides in the cytoplasm. It carries out the reaction L-histidine = trans-urocanate + NH4(+). It participates in amino-acid degradation; L-histidine degradation into L-glutamate; N-formimidoyl-L-glutamate from L-histidine: step 1/3. This is Histidine ammonia-lyase from Citrobacter koseri (strain ATCC BAA-895 / CDC 4225-83 / SGSC4696).